A 137-amino-acid polypeptide reads, in one-letter code: Large ribosomal subunit protein uL16 (137 aa).

Belongs to the universal ribosomal protein uL16 family. As to quaternary structure, part of the 50S ribosomal subunit.

In terms of biological role, binds 23S rRNA and is also seen to make contacts with the A and possibly P site tRNAs. This is Large ribosomal subunit protein uL16 from Psychrobacter cryohalolentis (strain ATCC BAA-1226 / DSM 17306 / VKM B-2378 / K5).